The sequence spans 559 residues: Dihydroxy-acid dehydratase (559 aa).

Asp78 contacts Mg(2+). Cys119 is a [2Fe-2S] cluster binding site. Mg(2+) contacts are provided by Asp120 and Lys121. Lys121 bears the N6-carboxylysine mark. Residue Cys191 coordinates [2Fe-2S] cluster. Glu442 contacts Mg(2+). Ser468 functions as the Proton acceptor in the catalytic mechanism.

The protein belongs to the IlvD/Edd family. Homodimer. Requires [2Fe-2S] cluster as cofactor. Mg(2+) serves as cofactor.

It carries out the reaction (2R)-2,3-dihydroxy-3-methylbutanoate = 3-methyl-2-oxobutanoate + H2O. The catalysed reaction is (2R,3R)-2,3-dihydroxy-3-methylpentanoate = (S)-3-methyl-2-oxopentanoate + H2O. Its pathway is amino-acid biosynthesis; L-isoleucine biosynthesis; L-isoleucine from 2-oxobutanoate: step 3/4. It functions in the pathway amino-acid biosynthesis; L-valine biosynthesis; L-valine from pyruvate: step 3/4. Functionally, functions in the biosynthesis of branched-chain amino acids. Catalyzes the dehydration of (2R,3R)-2,3-dihydroxy-3-methylpentanoate (2,3-dihydroxy-3-methylvalerate) into 2-oxo-3-methylpentanoate (2-oxo-3-methylvalerate) and of (2R)-2,3-dihydroxy-3-methylbutanoate (2,3-dihydroxyisovalerate) into 2-oxo-3-methylbutanoate (2-oxoisovalerate), the penultimate precursor to L-isoleucine and L-valine, respectively. The protein is Dihydroxy-acid dehydratase of Agathobacter rectalis (strain ATCC 33656 / DSM 3377 / JCM 17463 / KCTC 5835 / VPI 0990) (Eubacterium rectale).